A 1687-amino-acid chain; its full sequence is Muscle calcium channel subunit alpha-1 (1687 aa).

Positions 1 to 33 are disordered; that stretch reads MDDAVCPTETDNVQNKQKATTPKRTQRRGGKQQ. Residues 1 to 61 lie on the Cytoplasmic side of the membrane; that stretch reads MDDAVCPTET…IFCIKIVDSK (61 aa). The segment covering 9-23 has biased composition (polar residues); it reads ETDNVQNKQKATTPK. The stretch at 48-330 is one I repeat; sequence NPLRIFCIKI…LILGVLSGEF (283 aa). Residues 62–80 traverse the membrane as a helical segment; the sequence is LFEYFILLTIFANCVALAV. The Extracellular portion of the chain corresponds to 81–99; it reads YTPYPSGDSNITNQMLEKI. The N-linked (GlcNAc...) asparagine glycan is linked to N90. Residues 100–117 form a helical membrane-spanning segment; sequence EYIFLVIFTSECVMKIIA. Residues 118–130 lie on the Cytoplasmic side of the membrane; sequence YGFVLHTGSYLRN. Residues 131-145 traverse the membrane as a helical segment; the sequence is GWNFLDFFIVVIGMI. Residues 146–157 are Extracellular-facing; sequence STALSNLVKEGF. Residues 158–176 traverse the membrane as a helical segment; sequence DVKALRAFRVLRPLRLVSG. Topologically, residues 177–196 are cytoplasmic; the sequence is VPSLQVVLNSILKAMIPLLH. Residues 197 to 216 form a helical membrane-spanning segment; the sequence is IALLVLFVIIIYAIIGLELF. At 217 to 302 the chain is on the extracellular side; the sequence is SGKLHKTCRH…SIQDAMGSSW (86 aa). E285 serves as a coordination point for Ca(2+). Residues 303–327 traverse the membrane as a helical segment; that stretch reads EWIYFVSMVILGAFFVMNLILGVLS. Over 328 to 434 the chain is Cytoplasmic; the sequence is GEFSKERTKA…RACRKAVKSQ (107 aa). The stretch at 420–667 is one II repeat; that stretch reads NRRIRRACRK…VFLAIAVDNL (248 aa). A helical transmembrane segment spans residues 435–454; that stretch reads AFYWLIILLVFLNTGVLATE. The Extracellular portion of the chain corresponds to 455-467; that stretch reads HYRQPIWLDQFQE. A helical transmembrane segment spans residues 468–487; the sequence is YTNIFFIALFTCEMILKMYS. Residues 488–496 lie on the Cytoplasmic side of the membrane; it reads LGFQGYFVS. The chain crosses the membrane as a helical span at residues 497-515; sequence LFNRFDCFVVIGSISEMVL. Over 516 to 525 the chain is Extracellular; it reads TSSELMAPLG. Residues 526-544 traverse the membrane as a helical segment; the sequence is VSVLRCVRLLRVFKVTKYW. Topologically, residues 545–563 are cytoplasmic; it reads HSLSNLVASLLNSIQSIAS. Residues 564 to 583 form a helical membrane-spanning segment; the sequence is LLLLLFLFIVIFGLLGMQVF. The Extracellular segment spans residues 584–639; it reads GGRFTFKPEEEKPRSNFDSFYQSLLTVFQILTGEDWNVVMYDGIRAYGGVFSFGIV. Ca(2+) is bound at residue E617. The chain crosses the membrane as a helical span at residues 640-664; that stretch reads ACIYYIILFICGNYILLNVFLAIAV. Over 665 to 785 the chain is Cytoplasmic; that stretch reads DNLADADSLS…TNRFRIFCHR (121 aa). The III repeat unit spans residues 777-1059; the sequence is NRFRIFCHRL…IFVGFVIVTF (283 aa). A helical transmembrane segment spans residues 786 to 809; sequence LCNHSNFGNFILCCIMFSSAMLAA. The Extracellular segment spans residues 810–826; that stretch reads ENPLKADASRNIVLNKF. The helical transmembrane segment at 827 to 846 threads the bilayer; sequence DYFFTAVFTIELVLKLISYG. Residues 847–854 are Cytoplasmic-facing; it reads FVLHDGAF. The chain crosses the membrane as a helical span at residues 855-877; it reads CRSAFNLLDLLVVCVSLISIFFN. Over 878–885 the chain is Extracellular; that stretch reads SNAISVVK. The chain crosses the membrane as a helical span at residues 886–900; it reads ILRVLRVLRPLRAIN. Topologically, residues 901–921 are cytoplasmic; it reads RAKGLKHVVQCVIVAVKTIGN. Residues 922–941 traverse the membrane as a helical segment; that stretch reads IVLVTCLLQFMFAVIGVQLF. The Extracellular segment spans residues 942–1030; the sequence is KGKFFSCSDG…NGGPIYNFRP (89 aa). Positions 979 to 1068 are dihydropyridine binding; that stretch reads REWKNNKFHF…FQNEGEQEYK (90 aa). E1005 contacts Ca(2+). Residues 1031–1055 traverse the membrane as a helical segment; sequence IVAAYYIIYIIIIAFFMVNIFVGFV. At 1056–1110 the chain is on the cytoplasmic side; it reads IVTFQNEGEQEYKNCELDKNQRNCIEFALKAKPVRRYIPKHSIQYKVWWFVTSSS. Residues 1096-1370 form an IV repeat; that stretch reads HSIQYKVWWF…LFVAVIMDNF (275 aa). The helical transmembrane segment at 1111-1129 threads the bilayer; it reads FEYSIFVLIMINTVTLAMK. Residues 1130–1143 lie on the Extracellular side of the membrane; sequence FYKQPEYYSEILDA. A helical transmembrane segment spans residues 1144–1163; the sequence is LNMIFTAVFSLEFIFKLAAF. The Cytoplasmic segment spans residues 1164-1172; that stretch reads RFKNYFGDA. The chain crosses the membrane as a helical span at residues 1173 to 1191; the sequence is WNTFDFIIVLGSFIDIVYS. Residues 1192–1219 lie on the Extracellular side of the membrane; sequence EIKTKEQALATCDGQSCNKAKGGSTLIS. Residues 1220 to 1238 traverse the membrane as a helical segment; the sequence is INFFRLFRVMRLVKLLSKG. The Cytoplasmic segment spans residues 1239-1257; it reads EGIRTLLWTFIKSFQALPY. The helical transmembrane segment at 1258–1277 threads the bilayer; that stretch reads VALLIVMLFFIYAVIGMQVF. Topologically, residues 1278 to 1343 are extracellular; that stretch reads GKIMLEEGTS…AVNNCGSSIA (66 aa). Residues 1327–1389 form a dihydropyridine binding region; that stretch reads KCDPESDAVN…LGPHHLDEFI (63 aa). The phenylalkylamine binding stretch occupies residues 1337-1378; that stretch reads NCGSSIAFPYFISFYVLCSFLIINLFVAVIMDNFDYLTRDWS. The helical transmembrane segment at 1344–1362 threads the bilayer; the sequence is FPYFISFYVLCSFLIINLF. Residues 1363–1687 lie on the Cytoplasmic side of the membrane; sequence VAVIMDNFDY…PKSKDKDEEF (325 aa).

Belongs to the calcium channel alpha-1 subunit (TC 1.A.1.11) family. As to expression, predominantly expressed in the larval body wall musculature. In adults, highest expression in thorax followed by head and at a lower extent by abdomen.

Its subcellular location is the membrane. In terms of biological role, voltage-sensitive calcium channels (VSCC) mediate the entry of calcium ions into excitable cells and are also involved in a variety of calcium-dependent processes, including muscle contraction, hormone or neurotransmitter release, gene expression, cell motility, cell division and cell death. MDL-alpha1 encodes a dihydropyridine- and diltiazem-sensitive current in larval body wall muscle. This chain is Muscle calcium channel subunit alpha-1, found in Musca domestica (House fly).